Consider the following 785-residue polypeptide: MEKKVEAILEFDKIKKQLTEFASSSLGEQAILELAPATDFQVVQKTQLETEEGAKIIRLRGSAPITGLTDVFAHLKRLEIGGDLNGLEIYQIGSNLRVSRQMKNFMNDLLEIGVEIPLLGALSDELLVLKEVEEDIAISVDESGKVLDTASEALSTIRRTLRRTEDRVREKLESYLRDRNASKMLSDAVITIRNDRYVIPVKQEYKGHYGGIVHDQSASGQTLFIEPQSVVDLNNERKALQAKEKQEIERILAEISASLAAWINEIHHNTFILGRFDFIFAKARFGKAMKAVTPHLSDAGVVHLIAARHPLLDAAKVVANDIYLGEDFTTIVITGPNTGGKTITLKTLGLLTLMAQSGLQIPAQEDSTIAVFEHVFADIGDEQSIEQSLSTFSSHMTNIVSILENVNQKSLILYDELGAGTDPQEGAALAIAILDASHAKGASVVATTHYPELKAYGYNRVHATNASVEFNVETLSPTYKLLIGVPGRSNAFDISRRLGLSENIITEARSLVDTESADLNDMISSLEEKRNLAETEYEEARELARGADSLLKDLQKEISNYYQQKDKLIEQASEKAATIVEKAEAEAEEIIHELRTMQLNGAAGIKEHELIDAKTRLGNAKPKTINKTIPQAPKQKPHVFQEGDNVRVLSLGQKGTLLNKISDKEWNVQIGIIKMKIKTADLEYIQPEKPKKQRIITSVHSSGSPAKSELDLRGERYEDALQKVDKYLDEALLAGYPQVAIIHGKGTGALRTGVTEYLKNHRMVKSIRFGAAAEGGNGVTIVEFK.

Residue Gly335–Thr342 coordinates ATP. Residues Leu710–Lys785 enclose the Smr domain.

Belongs to the DNA mismatch repair MutS family. MutS2 subfamily. As to quaternary structure, homodimer. Binds to stalled ribosomes, contacting rRNA.

Endonuclease that is involved in the suppression of homologous recombination and thus may have a key role in the control of bacterial genetic diversity. Its function is as follows. Acts as a ribosome collision sensor, splitting the ribosome into its 2 subunits. Detects stalled/collided 70S ribosomes which it binds and splits by an ATP-hydrolysis driven conformational change. Acts upstream of the ribosome quality control system (RQC), a ribosome-associated complex that mediates the extraction of incompletely synthesized nascent chains from stalled ribosomes and their subsequent degradation. Probably generates substrates for RQC. In Listeria monocytogenes serotype 4a (strain HCC23), this protein is Endonuclease MutS2.